The chain runs to 372 residues: Flagellar P-ring protein (372 aa).

An N-terminal signal peptide occupies residues 1-26; it reads MNLSSLPHRLLAAAVALCAIAAPASA.

The protein belongs to the FlgI family. As to quaternary structure, the basal body constitutes a major portion of the flagellar organelle and consists of four rings (L,P,S, and M) mounted on a central rod.

The protein localises to the periplasm. It localises to the bacterial flagellum basal body. Its function is as follows. Assembles around the rod to form the L-ring and probably protects the motor/basal body from shearing forces during rotation. The chain is Flagellar P-ring protein from Xanthomonas campestris pv. campestris (strain ATCC 33913 / DSM 3586 / NCPPB 528 / LMG 568 / P 25).